The chain runs to 289 residues: YLVSPAGYAALGAYMFLLILVGFPVNFLTLYVTLEHKKLRTPLNYILLNLAVADLFMVLGGFTTTMYTSMHGYFVLGRLGCNLEGFFVTLGGEIALWSLVVLAIERWIGVFKSIRNFRFTEDHAIMGLGFSWVMAATCAVPPLVGWLRYIPEGMQCSCGVDYYTRAEGFNNESFVIYMFIVHFLIPLIVIFFCYGRLLCAVKEAAAAQQESETTQRAEKEVSRMVVIMVIGYLVCWLPYASVAWWIFCNQGSEFGPIFMTLPAFFAKSPAIYNPLIYICMNKQFPHCMI.

Residues 1–7 are Extracellular-facing; the sequence is YLVSPAG. A helical membrane pass occupies residues 8–32; sequence YAALGAYMFLLILVGFPVNFLTLYV. At 33–44 the chain is on the cytoplasmic side; sequence TLEHKKLRTPLN. The helical transmembrane segment at 45-67 threads the bilayer; sequence YILLNLAVADLFMVLGGFTTTMY. Residues 68-81 are Extracellular-facing; sequence TSMHGYFVLGRLGC. Cys-81 and Cys-158 form a disulfide bridge. The chain crosses the membrane as a helical span at residues 82 to 104; it reads NLEGFFVTLGGEIALWSLVVLAI. The 'Ionic lock' involved in activated form stabilization signature appears at 105-107; that stretch reads ERW. The Cytoplasmic portion of the chain corresponds to 105–123; it reads ERWIGVFKSIRNFRFTEDH. A helical membrane pass occupies residues 124 to 144; sequence AIMGLGFSWVMAATCAVPPLV. The Extracellular portion of the chain corresponds to 145–173; the sequence is GWLRYIPEGMQCSCGVDYYTRAEGFNNES. Asn-171 carries an N-linked (GlcNAc...) asparagine glycan. The chain crosses the membrane as a helical span at residues 174–195; the sequence is FVIYMFIVHFLIPLIVIFFCYG. Over 196 to 223 the chain is Cytoplasmic; that stretch reads RLLCAVKEAAAAQQESETTQRAEKEVSR. A helical membrane pass occupies residues 224–245; sequence MVVIMVIGYLVCWLPYASVAWW. The Extracellular portion of the chain corresponds to 246-257; the sequence is IFCNQGSEFGPI. The chain crosses the membrane as a helical span at residues 258 to 279; the sequence is FMTLPAFFAKSPAIYNPLIYIC. Residue Lys-267 is modified to N6-(retinylidene)lysine. The Cytoplasmic segment spans residues 280 to 289; it reads MNKQFPHCMI.

This sequence belongs to the G-protein coupled receptor 1 family. Opsin subfamily. Post-translationally, phosphorylated on some or all of the serine and threonine residues present in the C-terminal region. Contains one covalently linked retinal chromophore.

The protein resides in the membrane. It localises to the cell projection. It is found in the cilium. Its subcellular location is the photoreceptor outer segment. Photoreceptor required for image-forming vision at low light intensity. While most salt water fish species use retinal as chromophore, most freshwater fish use 3-dehydroretinal, or a mixture of retinal and 3-dehydroretinal. Light-induced isomerization of 11-cis to all-trans retinal triggers a conformational change that activates signaling via G-proteins. Subsequent receptor phosphorylation mediates displacement of the bound G-protein alpha subunit by arrestin and terminates signaling. This is Rhodopsin (rho) from Leocottus kesslerii (Kessler's sculpin).